The following is a 132-amino-acid chain: Ribonuclease VapC (132 aa).

A PINc domain is found at Tyr-4–Val-123. Asp-7 and Asp-98 together coordinate Mg(2+).

Belongs to the PINc/VapC protein family. As to quaternary structure, probably forms a complex with cognate antitoxin VapB2. The cofactor is Mg(2+).

Toxic component of a type II toxin-antitoxin (TA) system. Acts as an RNase. Its toxic effect is neutralized by cognate antitoxin VapB2 but not by non-cognate antitoxin VapB1. This Haemophilus influenzae (strain 86-028NP) protein is Ribonuclease VapC.